Reading from the N-terminus, the 197-residue chain is FMN-dependent NADH:quinone oxidoreductase (197 aa).

Residues S10, 16-18 (SQS), 93-96 (MYNF), and 137-140 (TRGG) each bind FMN.

This sequence belongs to the azoreductase type 1 family. As to quaternary structure, homodimer. Requires FMN as cofactor.

It carries out the reaction 2 a quinone + NADH + H(+) = 2 a 1,4-benzosemiquinone + NAD(+). The catalysed reaction is N,N-dimethyl-1,4-phenylenediamine + anthranilate + 2 NAD(+) = 2-(4-dimethylaminophenyl)diazenylbenzoate + 2 NADH + 2 H(+). Quinone reductase that provides resistance to thiol-specific stress caused by electrophilic quinones. In terms of biological role, also exhibits azoreductase activity. Catalyzes the reductive cleavage of the azo bond in aromatic azo compounds to the corresponding amines. The protein is FMN-dependent NADH:quinone oxidoreductase of Shewanella denitrificans (strain OS217 / ATCC BAA-1090 / DSM 15013).